The primary structure comprises 787 residues: uncharacterized protein (787 aa).

The signal sequence occupies residues 1–22 (MKFKYCAIFFSGFLGLSAILAA). Cys-23 carries N-palmitoyl cysteine lipidation. Cys-23 carries the S-diacylglycerol cysteine lipid modification. Disordered stretches follow at residues 178–270 (SDNV…DNKI) and 473–495 (KSKE…KKES). Positions 181–208 (VKVSQRTGETTQKSKVTNPLKINTQNDP) are enriched in polar residues. Residues 209-219 (ATKDLWEKIEA) are compositionally biased toward basic and acidic residues. Residues 242–261 (SSSSSLVNLKQSTDQTTTDD) show a composition bias toward low complexity.

This sequence belongs to the MG185/MG260 family.

It localises to the cell membrane. This is an uncharacterized protein from Mycoplasma pneumoniae (strain ATCC 29342 / M129 / Subtype 1) (Mycoplasmoides pneumoniae).